The primary structure comprises 299 residues: Bifunctional protein FolD (299 aa).

Residues 168 to 170 (GRS), Ser-193, and Ile-234 each bind NADP(+).

It belongs to the tetrahydrofolate dehydrogenase/cyclohydrolase family. In terms of assembly, homodimer.

It carries out the reaction (6R)-5,10-methylene-5,6,7,8-tetrahydrofolate + NADP(+) = (6R)-5,10-methenyltetrahydrofolate + NADPH. The enzyme catalyses (6R)-5,10-methenyltetrahydrofolate + H2O = (6R)-10-formyltetrahydrofolate + H(+). It participates in one-carbon metabolism; tetrahydrofolate interconversion. Catalyzes the oxidation of 5,10-methylenetetrahydrofolate to 5,10-methenyltetrahydrofolate and then the hydrolysis of 5,10-methenyltetrahydrofolate to 10-formyltetrahydrofolate. The chain is Bifunctional protein FolD from Rhizobium johnstonii (strain DSM 114642 / LMG 32736 / 3841) (Rhizobium leguminosarum bv. viciae).